The sequence spans 388 residues: Granulocyte-macrophage colony-stimulating factor receptor subunit alpha (388 aa).

Residues 1 to 29 (MTSSHAMNITPLAQLALLFSTLLLPGTQA) form the signal peptide. Topologically, residues 30 to 327 (LLAPTTPDAG…PLEAEDTRVP (298 aa)) are extracellular. Residues Asn-43, Asn-63, Asn-106, Asn-132, Asn-165, and Asn-237 are each glycosylated (N-linked (GlcNAc...) asparagine). The 97-residue stretch at 228-324 (PPRDVTASCN…PAHPLEAEDT (97 aa)) folds into the Fibronectin type-III domain. Residues 310–314 (WGEWS) carry the WSXWS motif motif. The helical transmembrane segment at 328-348 (GALLYAVTACAVLLCALALGV) threads the bilayer. Residues 349–388 (TCRRFEVTRRLFPPIPGIRDKVSDDVRVNPETLRKDLLQP) lie on the Cytoplasmic side of the membrane. The short motif at 359–367 (LFPPIPGIR) is the Box 1 motif element.

This sequence belongs to the type I cytokine receptor family. Type 5 subfamily. In terms of assembly, heterodimer of an alpha and a beta subunit. The beta subunit is common to the IL3, IL5 and GM-CSF receptors. The signaling GM-CSF receptor complex is a dodecamer of two head-to-head hexamers of two alpha, two beta, and two ligand subunits.

It localises to the membrane. Low affinity receptor for granulocyte-macrophage colony-stimulating factor. Transduces a signal that results in the proliferation, differentiation, and functional activation of hematopoietic cells. The polypeptide is Granulocyte-macrophage colony-stimulating factor receptor subunit alpha (Csf2ra) (Mus musculus (Mouse)).